A 159-amino-acid chain; its full sequence is Ribosomal RNA large subunit methyltransferase H (159 aa).

Residues Leu-76, Gly-108, and 127-132 contribute to the S-adenosyl-L-methionine site; that span reads FGLLTL.

This sequence belongs to the RNA methyltransferase RlmH family. Homodimer.

It is found in the cytoplasm. It carries out the reaction pseudouridine(1915) in 23S rRNA + S-adenosyl-L-methionine = N(3)-methylpseudouridine(1915) in 23S rRNA + S-adenosyl-L-homocysteine + H(+). Its function is as follows. Specifically methylates the pseudouridine at position 1915 (m3Psi1915) in 23S rRNA. In Streptococcus equi subsp. zooepidemicus (strain MGCS10565), this protein is Ribosomal RNA large subunit methyltransferase H.